A 211-amino-acid chain; its full sequence is Ras-related protein Rab-38 (211 aa).

Gly-19, Val-20, Gly-21, Lys-22, Thr-23, Ser-24, Ser-35, Ser-36, Tyr-38, and Thr-41 together coordinate GTP. Residue Thr-23 coordinates Mg(2+). Positions Gln-32–Phe-46 match the Switch 1 motif. Mg(2+) contacts are provided by Thr-41 and Asp-65. Gly-68, Lys-128, Asp-130, Ala-160, and Lys-161 together coordinate GTP. Positions Gly-68 to Arg-81 match the Switch 2 motif. Cys-205 is lipidated: S-palmitoyl cysteine. Residue Cys-208 is the site of S-geranylgeranyl cysteine attachment.

It belongs to the small GTPase superfamily. Rab family. As to quaternary structure, interacts with ANKRD27. Requires Mg(2+) as cofactor.

The protein resides in the cell membrane. It localises to the cytoplasmic vesicle. Its subcellular location is the phagosome. The protein localises to the phagosome membrane. It is found in the melanosome. The protein resides in the melanosome membrane. It catalyses the reaction GTP + H2O = GDP + phosphate + H(+). Regulated by guanine nucleotide exchange factors (GEFs) including the BLOC-3 complex composed of HPS1 and HPS4 which promote the exchange of bound GDP for free GTP. Regulated by GTPase activating proteins (GAPs) including SGSM2 which increase the GTP hydrolysis activity. Inhibited by GDP dissociation inhibitors (GDIs). Its function is as follows. The small GTPases Rab are key regulators of intracellular membrane trafficking, from the formation of transport vesicles to their fusion with membranes. Rabs cycle between an inactive GDP-bound form and an active GTP-bound form that is able to recruit to membranes different sets of downstream effectors directly responsible for vesicle formation, movement, tethering and fusion. RAB38 plays a role in the maturation of phagosomes that engulf pathogens, such as S.aureus and Mycobacterium. May be involved in melanosomal transport and docking. Involved in the proper sorting of TYRP1. Involved in peripheral melanosomal distribution of TYRP1 in melanocytes; the function, which probably is implicating vesicle-trafficking, includes cooperation with ANKRD27 and VAMP7. Plays an important role in the control of melanin production and melanosome biogenesis. In concert with RAB32, regulates the proper trafficking of melanogenic enzymes TYR, TYRP1 and DCT/TYRP2 to melanosomes in melanocytes. In Mus musculus (Mouse), this protein is Ras-related protein Rab-38.